The following is a 285-amino-acid chain: ATP phosphoribosyltransferase (285 aa).

It belongs to the ATP phosphoribosyltransferase family. Long subfamily. Mg(2+) serves as cofactor.

The protein localises to the cytoplasm. It carries out the reaction 1-(5-phospho-beta-D-ribosyl)-ATP + diphosphate = 5-phospho-alpha-D-ribose 1-diphosphate + ATP. Its pathway is amino-acid biosynthesis; L-histidine biosynthesis; L-histidine from 5-phospho-alpha-D-ribose 1-diphosphate: step 1/9. Feedback inhibited by histidine. Functionally, catalyzes the condensation of ATP and 5-phosphoribose 1-diphosphate to form N'-(5'-phosphoribosyl)-ATP (PR-ATP). Has a crucial role in the pathway because the rate of histidine biosynthesis seems to be controlled primarily by regulation of HisG enzymatic activity. The sequence is that of ATP phosphoribosyltransferase from Sulfurisphaera tokodaii (strain DSM 16993 / JCM 10545 / NBRC 100140 / 7) (Sulfolobus tokodaii).